Consider the following 113-residue polypeptide: RING-box protein 2 (113 aa).

Residues Met1 to Gly26 form a disordered region. Ala2 carries the N-acetylalanine modification. Residues Cys50, Cys53, Cys61, Cys64, Cys73, Cys80, His82, His85, Cys87, Cys88, Cys99, and Cys102 each coordinate Zn(2+). The RING-type zinc finger occupies Cys61–Gln103.

Belongs to the RING-box family. Catalytic component of multiple cullin-5-RING E3 ubiquitin-protein ligase complexes (ECS complexes, also named CRL5 complexes) composed of CUL5, Elongin BC (ELOB and ELOC), RNF7/RBX2 and a variable SOCS box domain-containing protein as substrate-specific recognition component. Also interacts (with lower preference) with CUL1, CUL2, CUL3, CUL4A and CUL4B; additional evidence is however required to confirm this result in vivo. Interacts with UBE2F. Interacts with CSNK2B, the interaction is not affected by phosphorylation by CK2. May also interact with DCUN1D1, DCUN1D2, DCUN1D3, DCUN1D4 and DCUN1D5.

The protein resides in the cytoplasm. It localises to the nucleus. It catalyses the reaction S-ubiquitinyl-[E2 ubiquitin-conjugating enzyme]-L-cysteine + [acceptor protein]-L-lysine = [E2 ubiquitin-conjugating enzyme]-L-cysteine + N(6)-ubiquitinyl-[acceptor protein]-L-lysine.. The catalysed reaction is S-[NEDD8-protein]-yl-[E2 NEDD8-conjugating enzyme]-L-cysteine + [cullin]-L-lysine = [E2 NEDD8-conjugating enzyme]-L-cysteine + N(6)-[NEDD8-protein]-yl-[cullin]-L-lysine.. It participates in protein modification; protein ubiquitination. It functions in the pathway protein modification; protein neddylation. In terms of biological role, catalytic component of multiple cullin-5-RING E3 ubiquitin-protein ligase complexes (ECS complexes), which mediate the ubiquitination and subsequent proteasomal degradation of target proteins. It is thereby involved in various biological processes, such as cell cycle progression, signal transduction and transcription. The functional specificity of the E3 ubiquitin-protein ligase ECS complexes depend on the variable SOCS box-containing substrate recognition component. Within ECS complexes, RNF7/RBX2 recruits the E2 ubiquitination enzyme to the complex via its RING-type and brings it into close proximity to the substrate. Catalytic subunit of various SOCS-containing ECS complexes, such as the ECS(SOCS7) complex, that regulate reelin signaling by mediating ubiquitination and degradation of DAB1. The ECS(SOCS2) complex mediates the ubiquitination and subsequent proteasomal degradation of phosphorylated EPOR and GHR. Promotes ubiquitination and degradation of NF1, thereby regulating Ras protein signal transduction. As part of the ECS(ASB9) complex, catalyzes ubiquitination and degradation of CKB. The ECS(SPSB3) complex catalyzes ubiquitination of nuclear CGAS. As part of the ECS(RAB40C) complex, mediates ANKRD28 ubiquitination and degradation, thereby inhibiting protein phosphatase 6 (PP6) complex activity and focal adhesion assembly during cell migration. As part of some ECS complex, catalyzes 'Lys-11'-linked ubiquitination and degradation of BTRC. ECS complexes and ARIH2 collaborate in tandem to mediate ubiquitination of target proteins; ARIH2 mediating addition of the first ubiquitin on CRLs targets. Specifically catalyzes the neddylation of CUL5 via its interaction with UBE2F. Does not catalyze neddylation of other cullins (CUL1, CUL2, CUL3, CUL4A or CUL4B). May play a role in protecting cells from apoptosis induced by redox agents. The polypeptide is RING-box protein 2 (Mus musculus (Mouse)).